The chain runs to 294 residues: MITRLFAQLVSLSIVTYWNDAIVATNFSWLFITFFVMTFTFRTFSRYFKKPIIWTLYFFLCLIAFLLLWAARIHINILFSFAFGDVYSFFMAGVFLFYGFGELLPIGSDSDVGEASWVVNPATGASGSGGNGWTESAANDPAREVSLAPFPPQLTHPVPFPAEPGSPDPVSPPPPIASFYSRIERAESLHAGNIELAEDLQRIQEMERNLENERSPYRGRELAARIDWEVRELEGKVARNRAWDMVRDAQLDIWRQGLDQELVRQQENESRLEERRFQSHSTNSLFEADSSRDN.

The next 3 helical transmembrane spans lie at 21 to 41 (AIVA…TFTF), 51 to 71 (PIIW…LWAA), and 77 to 97 (ILFS…VFLF). Residues 156-176 (HPVPFPAEPGSPDPVSPPPPI) form a disordered region. A coiled-coil region spans residues 184-215 (ERAESLHAGNIELAEDLQRIQEMERNLENERS). A compositionally biased stretch (basic and acidic residues) spans 265–277 (QQENESRLEERRF). The segment at 265-294 (QQENESRLEERRFQSHSTNSLFEADSSRDN) is disordered.

It is found in the mitochondrion membrane. This is an uncharacterized protein from Arabidopsis thaliana (Mouse-ear cress).